The primary structure comprises 150 residues: UPF0178 protein Sbal_1771 (150 aa).

It belongs to the UPF0178 family.

The sequence is that of UPF0178 protein Sbal_1771 from Shewanella baltica (strain OS155 / ATCC BAA-1091).